We begin with the raw amino-acid sequence, 531 residues long: High-affinity glucose transporter ght2 (531 aa).

Over 5-13 the chain is Cytoplasmic; it reads RGKNFTLVM. The chain crosses the membrane as a helical span at residues 14–34; the sequence is LIFVSMAGWMFGADTGSIGGV. Topologically, residues 35 to 62 are extracellular; the sequence is TSMRDFRERYADRYDPITDQYSLSSARQ. The helical transmembrane segment at 63 to 83 threads the bilayer; it reads GLLTGMVNVGSLFGCIISSPI. The Cytoplasmic portion of the chain corresponds to 84–91; it reads ADRFGKRL. A helical transmembrane segment spans residues 92-112; the sequence is SIIGFCAVYIIGIIVQVTAVP. Over 113–116 the chain is Extracellular; sequence SWVQ. The helical transmembrane segment at 117–137 threads the bilayer; sequence IMVAKIWTGIGIGALSVLAPG. Residues 138 to 148 are Cytoplasmic-facing; that stretch reads YQSETAPPSIR. A helical transmembrane segment spans residues 149 to 169; that stretch reads GTVVVTYQLFVTGGIFIAACI. Residues 170–183 are Extracellular-facing; the sequence is NMGTHKLHKTAQWR. A helical membrane pass occupies residues 184 to 204; the sequence is VSIGINLLWGIITMIGILFLP. The Cytoplasmic segment spans residues 205-270; the sequence is ESPRYLIQVG…IFGKDIRYRT (66 aa). The chain crosses the membrane as a helical span at residues 271 to 289; sequence FLGMFVMSLQQLTGNNYFF. Residues 290–305 are Extracellular-facing; the sequence is YYGFSVMQGAGINSPY. A helical transmembrane segment spans residues 306–326; sequence LSAMILDAVNFGCTFGGMYVL. Over 327-332 the chain is Cytoplasmic; it reads ERFGRR. Residues 333–353 traverse the membrane as a helical segment; the sequence is NPLIIGGIWQSICFFIYSAVG. The Extracellular portion of the chain corresponds to 354–367; sequence SRALYHKNGTSNTR. N-linked (GlcNAc...) asparagine glycosylation occurs at Asn361. Residues 368 to 388 traverse the membrane as a helical segment; sequence AGAVMIVMACLFIFGFAQTWA. Topologically, residues 389–408 are cytoplasmic; that stretch reads PAAYVIVGESYPVRYRSKCA. Residues 409-429 form a helical membrane-spanning segment; the sequence is AVATASNWLWNFLISFFTPFI. The Extracellular segment spans residues 430–436; that stretch reads QASIGFK. Residues 437 to 457 form a helical membrane-spanning segment; sequence YGYVFASCNLTGAIVIFLFAK. At 458–531 the chain is on the cytoplasmic side; the sequence is ETKGLTLEEI…QYSSHEEDYA (74 aa). The tract at residues 491–531 is disordered; that stretch reads KKVEKEKSRKGGARGESVEYVERASNTDSSPQYSSHEEDYA. Residues Ser507, Ser515, Ser519, and Ser520 each carry the phosphoserine modification. Polar residues predominate over residues 514-524; it reads ASNTDSSPQYS. Phosphotyrosine is present on Tyr523.

This sequence belongs to the major facilitator superfamily. Sugar transporter (TC 2.A.1.1) family.

The protein localises to the membrane. High-affinity glucose transporter. The polypeptide is High-affinity glucose transporter ght2 (ght2) (Schizosaccharomyces pombe (strain 972 / ATCC 24843) (Fission yeast)).